Reading from the N-terminus, the 292-residue chain is Probable septum site-determining protein MinC (292 aa).

Residues 112–188 (DTAPPNDVAT…PQSSSALVIT (77 aa)) form a disordered region. The segment covering 128 to 137 (EATAEAAAKA) has biased composition (low complexity). The segment covering 140-150 (QDDEAYGEQAD) has biased composition (acidic residues). Over residues 171–185 (ANRPTATPPQSSSAL) the composition is skewed to polar residues.

This sequence belongs to the MinC family. Interacts with MinD and FtsZ.

Its function is as follows. Cell division inhibitor that blocks the formation of polar Z ring septums. Rapidly oscillates between the poles of the cell to destabilize FtsZ filaments that have formed before they mature into polar Z rings. Prevents FtsZ polymerization. This chain is Probable septum site-determining protein MinC, found in Bordetella bronchiseptica (strain ATCC BAA-588 / NCTC 13252 / RB50) (Alcaligenes bronchisepticus).